Here is a 295-residue protein sequence, read N- to C-terminus: Ankyrin repeat and SOCS box protein 17 (295 aa).

One copy of the ANK repeat lies at 146–176; sequence SGITPLLYVAQTRQSNILKILLQYGILEREK. Positions 243-295 constitute an SOCS box domain; sequence DYIPPTRYKDPCELVHLCRITIRTQLLANNMLPNGIFSLLIPTRLQNFLNLES.

This sequence belongs to the ankyrin SOCS box (ASB) family. As to expression, specifically expressed in testis. Localizes to spermatogenic cells in testis, with highest expression in round spermatids and condensing spermatids and lower expression in pachytene spermatocytes.

The protein operates within protein modification; protein ubiquitination. Its function is as follows. May be a substrate-recognition component of a SCF-like ECS (Elongin-Cullin-SOCS-box protein) E3 ubiquitin-protein ligase complex which mediates the ubiquitination and subsequent proteasomal degradation of target proteins. This is Ankyrin repeat and SOCS box protein 17 (Asb17) from Mus musculus (Mouse).